The chain runs to 189 residues: Pyridoxal 5'-phosphate synthase subunit PdxT (189 aa).

Residue 47–49 (GES) participates in L-glutamine binding. The active-site Nucleophile is Cys79. L-glutamine-binding positions include Arg105 and 132–133 (IR). Residues His168 and Glu170 each act as charge relay system in the active site.

The protein belongs to the glutaminase PdxT/SNO family. As to quaternary structure, in the presence of PdxS, forms a dodecamer of heterodimers. Only shows activity in the heterodimer.

It catalyses the reaction aldehydo-D-ribose 5-phosphate + D-glyceraldehyde 3-phosphate + L-glutamine = pyridoxal 5'-phosphate + L-glutamate + phosphate + 3 H2O + H(+). The enzyme catalyses L-glutamine + H2O = L-glutamate + NH4(+). The protein operates within cofactor biosynthesis; pyridoxal 5'-phosphate biosynthesis. Catalyzes the hydrolysis of glutamine to glutamate and ammonia as part of the biosynthesis of pyridoxal 5'-phosphate. The resulting ammonia molecule is channeled to the active site of PdxS. In Methanocorpusculum labreanum (strain ATCC 43576 / DSM 4855 / Z), this protein is Pyridoxal 5'-phosphate synthase subunit PdxT.